The sequence spans 136 residues: Peptide methionine sulfoxide reductase MsrB (136 aa).

The 128-residue stretch at 9–136 folds into the MsrB domain; the sequence is DAEWKALLAE…NSASLDFKPK (128 aa). The Zn(2+) site is built by C53, C56, C102, and C105. Catalysis depends on C125, which acts as the Nucleophile.

It belongs to the MsrB Met sulfoxide reductase family. Zn(2+) is required as a cofactor.

It catalyses the reaction L-methionyl-[protein] + [thioredoxin]-disulfide + H2O = L-methionyl-(R)-S-oxide-[protein] + [thioredoxin]-dithiol. In Polaromonas sp. (strain JS666 / ATCC BAA-500), this protein is Peptide methionine sulfoxide reductase MsrB.